An 82-amino-acid chain; its full sequence is Sec-independent protein translocase protein TatA (82 aa).

The helical transmembrane segment at Met1–Gly21 threads the bilayer. The disordered stretch occupies residues Ser48 to Ala82.

It belongs to the TatA/E family. As to quaternary structure, the Tat system comprises two distinct complexes: a TatABC complex, containing multiple copies of TatA, TatB and TatC subunits, and a separate TatA complex, containing only TatA subunits. Substrates initially bind to the TatABC complex, which probably triggers association of the separate TatA complex to form the active translocon.

The protein resides in the cell inner membrane. In terms of biological role, part of the twin-arginine translocation (Tat) system that transports large folded proteins containing a characteristic twin-arginine motif in their signal peptide across membranes. TatA could form the protein-conducting channel of the Tat system. In Aliivibrio salmonicida (strain LFI1238) (Vibrio salmonicida (strain LFI1238)), this protein is Sec-independent protein translocase protein TatA.